The primary structure comprises 419 residues: Transcription termination factor Rho (419 aa).

In terms of domain architecture, Rho RNA-BD spans 48-123 (DIFGDGVLEI…LKVNEVNFDK (76 aa)). RNA-binding regions lie at residues 61–66 (GFGFLR), 78–80 (DIY), and 108–110 (ERY). ATP is bound by residues 169 to 174 (GRGQRG), 181 to 186 (KAGKTM), and Arg-212. Residues 284-288 (VLTGG) are RNA-binding 2.

The protein belongs to the Rho family. In terms of assembly, homohexamer. The homohexamer assembles into an open ring structure.

Its function is as follows. Facilitates transcription termination by a mechanism that involves Rho binding to the nascent RNA, activation of Rho's RNA-dependent ATPase activity, and release of the mRNA from the DNA template. This Escherichia coli O157:H7 protein is Transcription termination factor Rho.